The chain runs to 283 residues: UPF0273 protein STK_18300 (283 aa).

The 246-residue stretch at 4-249 (LRVRTYIPGF…YLRITNVKAE (246 aa)) folds into the KaiC domain. 31-38 (GGPGTGKS) provides a ligand contact to ATP. Residues 261-283 (MKKAVEESEEEKESIQEAEIEEE) are disordered. The span at 267 to 283 (ESEEEKESIQEAEIEEE) shows a compositional bias: acidic residues.

This sequence belongs to the UPF0273 family.

The protein is UPF0273 protein STK_18300 of Sulfurisphaera tokodaii (strain DSM 16993 / JCM 10545 / NBRC 100140 / 7) (Sulfolobus tokodaii).